A 3707-amino-acid chain; its full sequence is Basement membrane-specific heparan sulfate proteoglycan core protein (3707 aa).

The first 21 residues, 1-21, serve as a signal peptide directing secretion; the sequence is MGQRAVGSLLLGLLLHARLLA. O-linked (Xyl...) (heparan sulfate) serine glycosylation is found at serine 65, serine 71, and serine 76. Residues 80-191 enclose the SEA domain; it reads QMVYFRALVN…WGFKFRRLGT (112 aa). N-linked (GlcNAc...) asparagine glycosylation occurs at asparagine 89. 4 LDL-receptor class A domains span residues 195–234, 281–319, 320–359, and 360–403; these read FPRV…ELNC, GPSA…ELGC, ASPP…EANC, and SVKQ…EFGC. 13 disulfides stabilise this stretch: cysteine 199-cysteine 212, cysteine 206-cysteine 225, cysteine 219-cysteine 234, cysteine 285-cysteine 297, cysteine 292-cysteine 310, cysteine 304-cysteine 319, cysteine 325-cysteine 337, cysteine 332-cysteine 350, cysteine 344-cysteine 359, cysteine 368-cysteine 381, cysteine 375-cysteine 394, cysteine 388-cysteine 403, and cysteine 428-cysteine 479. Residue asparagine 358 is glycosylated (N-linked (GlcNAc...) asparagine). The region spanning 404 to 504 is the Ig-like C2-type 1 domain; it reads MPPQVVTPPQ…VLELVPQRGP (101 aa). Residues 521 to 530 form the Laminin EGF-like 1; first part domain; it reads CFCFGVTNVC. A Laminin IV type A 1 domain is found at 538 to 730; sequence DQIRLSFDQP…IHGRAHSVEE (193 aa). An N-linked (GlcNAc...) asparagine glycan is attached at asparagine 554. One can recognise a Laminin EGF-like 1; second part domain in the interval 731-763; sequence CRCPIGYSGLSCESCDAHFTRVPGGPYLGTCSG. 11 disulfide bridges follow: cysteine 764–cysteine 773, cysteine 766–cysteine 780, cysteine 783–cysteine 792, cysteine 795–cysteine 811, cysteine 814–cysteine 829, cysteine 816–cysteine 839, cysteine 842–cysteine 851, cysteine 854–cysteine 869, cysteine 879–cysteine 892, cysteine 894–cysteine 903, and cysteine 906–cysteine 921. 2 consecutive Laminin EGF-like domains span residues 764–813 and 814–871; these read CNCN…ACRP and CPCP…KCRP. Residues 879–923 enclose the Laminin EGF-like 4; truncated domain; the sequence is CDERGSLGTSGETCRCKNNVVGRLCNECSDGSFHLSKQNPDGCLK. One can recognise a Laminin EGF-like 5; first part domain in the interval 924 to 933; that stretch reads CFCMGVSRQC. In terms of domain architecture, Laminin IV type A 2 spans 941-1125; that stretch reads AQVLGASEQP…GQDSAREVEQ (185 aa). Positions 1126 to 1158 constitute a Laminin EGF-like 5; second part domain; sequence CTCPPGYRGPSCQDCDTGYTRVPSGLYLGTCER. Disulfide bonds link cysteine 1159/cysteine 1168, cysteine 1161/cysteine 1175, cysteine 1178/cysteine 1187, cysteine 1190/cysteine 1206, cysteine 1209/cysteine 1224, cysteine 1211/cysteine 1234, cysteine 1237/cysteine 1246, cysteine 1249/cysteine 1263, cysteine 1275/cysteine 1287, cysteine 1277/cysteine 1293, cysteine 1295/cysteine 1304, and cysteine 1307/cysteine 1322. 3 Laminin EGF-like domains span residues 1159–1208, 1209–1265, and 1275–1324; these read CNCH…DCQP, CPCY…PCHR, and CGCD…GCLP. The 10-residue stretch at 1325-1334 folds into the Laminin EGF-like 9; first part domain; that stretch reads CFCMGVTQQC. A Laminin IV type A 3 domain is found at 1344-1529; sequence ISTHFAPGDF…SGPRALEVEE (186 aa). In terms of domain architecture, Laminin EGF-like 9; second part spans 1530 to 1562; the sequence is CRCPPGYVGLSCQDCAPGYTRTGSGLYLGQCEL. 8 disulfides stabilise this stretch: cysteine 1563/cysteine 1572, cysteine 1565/cysteine 1579, cysteine 1582/cysteine 1591, cysteine 1594/cysteine 1610, cysteine 1613/cysteine 1628, cysteine 1615/cysteine 1638, cysteine 1641/cysteine 1650, and cysteine 1653/cysteine 1668. 2 Laminin EGF-like domains span residues 1563 to 1612 and 1613 to 1670; these read CECN…DCQP and CACP…RCQP. Ig-like C2-type domains follow at residues 1677–1771, 1772–1865, 1866–1954, 1955–2049, 2050–2148, 2149–2244, 2245–2343, 2344–2436, 2437–2532, 2533–2619, 2620–2720, 2721–2809, 2810–2895, and 2896–2980; these read EVQI…KPIM, VTVE…STAP, VASI…GGSG, PRVQ…PAPA, SPAP…PGVV, PPIR…PAPG, LAQP…RLRS, PVIS…PPTV, SVLP…APGT, PQVQ…VESP, PYAT…GGST, PTVQ…ALPS, VLIN…LVQA, and LPQI…LQVP. Residues 1713–1733 form a disordered region; sequence DGRPLPSSAQQRHQGSELHFP. Disulfide bonds link cysteine 1792-cysteine 1839, cysteine 1886-cysteine 1932, and cysteine 1976-cysteine 2021. Residues 2039 to 2061 form a disordered region; the sequence is SPSTNSPPAPASPAPIRIESSSS. Positions 2052–2061 are enriched in low complexity; sequence APIRIESSSS. 3 cysteine pairs are disulfide-bonded: cysteine 2073–cysteine 2118, cysteine 2170–cysteine 2215, and cysteine 2268–cysteine 2313. Asparagine 2336, asparagine 2394, and asparagine 2427 each carry an N-linked (GlcNAc...) asparagine glycan. Cysteine 2365 and cysteine 2413 are joined by a disulfide. Cystine bridges form between cysteine 2456–cysteine 2506 and cysteine 2554–cysteine 2599. A glycan (N-linked (GlcNAc...) asparagine) is linked at asparagine 2600. Cysteines 2641 and 2686 form a disulfide. Intrachain disulfides connect cysteine 2831/cysteine 2876 and cysteine 2917/cysteine 2962. The Laminin G-like 1 domain occupies 2984–3162; that stretch reads IPYFTQTPYS…VNLTTHGISH (179 aa). 2 N-linked (GlcNAc...) asparagine glycosylation sites follow: asparagine 3098 and asparagine 3154. 5 cysteine pairs are disulfide-bonded: cysteine 3137–cysteine 3163, cysteine 3166–cysteine 3177, cysteine 3171–cysteine 3187, cysteine 3204–cysteine 3216, and cysteine 3229–cysteine 3238. One can recognise an EGF-like domain in the interval 3163–3241; that stretch reads CPTCQDRPCQ…GRSGVRCEEG (79 aa). The Laminin G-like 2 domain occupies 3245–3425; the sequence is TTPSMSGAGS…VGQCYDSSPC (181 aa). The N-linked (GlcNAc...) asparagine glycan is linked to asparagine 3385. 7 disulfides stabilise this stretch: cysteine 3393-cysteine 3419, cysteine 3425-cysteine 3436, cysteine 3430-cysteine 3446, cysteine 3448-cysteine 3457, cysteine 3464-cysteine 3476, cysteine 3470-cysteine 3481, and cysteine 3483-cysteine 3492. O-linked (Xyl...) (chondroitin sulfate) serine glycosylation occurs at serine 3510. Residues 3518–3705 form the Laminin G-like 3 domain; sequence QYGAYFYDNG…AQAGANTRPC (188 aa). Aspartate 3574 and leucine 3591 together coordinate Ca(2+). The segment at 3615 to 3617 is mediates motor neuron attachment; sequence LRE. Residues alanine 3641 and asparagine 3643 each coordinate Ca(2+). The cysteines at positions 3671 and 3705 are disulfide-linked. The interval 3680-3707 is disordered; that stretch reads ARPGAPPPQPLDLQHRAQAGANTRPCPS.

As to quaternary structure, has a strong tendency to aggregate in dimers or stellate structures. Interacts with other basement membrane components such as laminin, prolargin and collagen type IV. Interacts with COL13A1. Interacts with FGFBP1. Interacts with VWA1. Interacts (via C-terminus) with ECM1 (via C-terminus). Interacts with SVEP1. Proteolytic processing produces the C-terminal angiogenic peptide, endorepellin. This peptide can be further processed to produce the LG3 peptide. In terms of processing, O-glycosylated. Contains three heparan sulfate chains. Also contains chondroitin sulfate.

It localises to the secreted. The protein localises to the extracellular space. Its subcellular location is the extracellular matrix. It is found in the basement membrane. In terms of biological role, integral component of basement membranes. Component of the glomerular basement membrane (GBM), responsible for the fixed negative electrostatic membrane charge, and which provides a barrier which is both size- and charge-selective. It serves as an attachment substrate for cells. Plays essential roles in vascularization. Critical for normal heart development and for regulating the vascular response to injury. Also required for avascular cartilage development. Anti-angiogenic and anti-tumor peptide that inhibits endothelial cell migration, collagen-induced endothelial tube morphogenesis and blood vessel growth in the chorioallantoic membrane. Blocks endothelial cell adhesion to fibronectin and type I collagen. Anti-tumor agent in neovascularization. Interaction with its ligand, integrin alpha2/beta1, is required for the anti-angiogenic properties. Evokes a reduction in phosphorylation of receptor tyrosine kinases via alpha2/beta1 integrin-mediated activation of the tyrosine phosphatase, PTPN6. Its function is as follows. Has anti-angiogenic properties that require binding of calcium ions for full activity. The protein is Basement membrane-specific heparan sulfate proteoglycan core protein (Hspg2) of Mus musculus (Mouse).